The primary structure comprises 278 residues: Ribosomal RNA small subunit methyltransferase A (278 aa).

The S-adenosyl-L-methionine site is built by asparagine 27, leucine 29, glycine 54, glutamate 75, aspartate 101, and asparagine 120.

The protein belongs to the class I-like SAM-binding methyltransferase superfamily. rRNA adenine N(6)-methyltransferase family. RsmA subfamily.

It localises to the cytoplasm. It catalyses the reaction adenosine(1518)/adenosine(1519) in 16S rRNA + 4 S-adenosyl-L-methionine = N(6)-dimethyladenosine(1518)/N(6)-dimethyladenosine(1519) in 16S rRNA + 4 S-adenosyl-L-homocysteine + 4 H(+). In terms of biological role, specifically dimethylates two adjacent adenosines (A1518 and A1519) in the loop of a conserved hairpin near the 3'-end of 16S rRNA in the 30S particle. May play a critical role in biogenesis of 30S subunits. The polypeptide is Ribosomal RNA small subunit methyltransferase A (Zymomonas mobilis subsp. mobilis (strain ATCC 31821 / ZM4 / CP4)).